A 357-amino-acid chain; its full sequence is UDP-N-acetylglucosamine--N-acetylmuramyl-(pentapeptide) pyrophosphoryl-undecaprenol N-acetylglucosamine transferase (357 aa).

UDP-N-acetyl-alpha-D-glucosamine is bound by residues 13-15, R166, S196, and Q291; that span reads SAG.

This sequence belongs to the glycosyltransferase 28 family. MurG subfamily.

It is found in the cell membrane. It carries out the reaction di-trans,octa-cis-undecaprenyl diphospho-N-acetyl-alpha-D-muramoyl-L-alanyl-D-glutamyl-meso-2,6-diaminopimeloyl-D-alanyl-D-alanine + UDP-N-acetyl-alpha-D-glucosamine = di-trans,octa-cis-undecaprenyl diphospho-[N-acetyl-alpha-D-glucosaminyl-(1-&gt;4)]-N-acetyl-alpha-D-muramoyl-L-alanyl-D-glutamyl-meso-2,6-diaminopimeloyl-D-alanyl-D-alanine + UDP + H(+). Its pathway is cell wall biogenesis; peptidoglycan biosynthesis. Cell wall formation. Catalyzes the transfer of a GlcNAc subunit on undecaprenyl-pyrophosphoryl-MurNAc-pentapeptide (lipid intermediate I) to form undecaprenyl-pyrophosphoryl-MurNAc-(pentapeptide)GlcNAc (lipid intermediate II). This chain is UDP-N-acetylglucosamine--N-acetylmuramyl-(pentapeptide) pyrophosphoryl-undecaprenol N-acetylglucosamine transferase, found in Clostridium perfringens (strain ATCC 13124 / DSM 756 / JCM 1290 / NCIMB 6125 / NCTC 8237 / Type A).